The chain runs to 148 residues: Large ribosomal subunit protein bL9 (148 aa).

Belongs to the bacterial ribosomal protein bL9 family.

In terms of biological role, binds to the 23S rRNA. The chain is Large ribosomal subunit protein bL9 from Geobacter metallireducens (strain ATCC 53774 / DSM 7210 / GS-15).